Consider the following 258-residue polypeptide: NAD(P)H-hydrate epimerase (258 aa).

Positions 15–244 (AFQLDQELMS…RIAKEYGIED (230 aa)) constitute a YjeF N-terminal domain. 75-79 (NNGGD) contributes to the (6S)-NADPHX binding site. 2 residues coordinate K(+): Asn76 and Asp145. Residues 149–155 (GFSFKPP) and Asp181 each bind (6S)-NADPHX. Ser184 is a binding site for K(+).

The protein belongs to the NnrE/AIBP family. K(+) is required as a cofactor.

It is found in the cytoplasm. It localises to the mitochondrion. The catalysed reaction is (6R)-NADHX = (6S)-NADHX. It catalyses the reaction (6R)-NADPHX = (6S)-NADPHX. Catalyzes the epimerization of the S- and R-forms of NAD(P)HX, a damaged form of NAD(P)H that is a result of enzymatic or heat-dependent hydration. This is a prerequisite for the S-specific NAD(P)H-hydrate dehydratase to allow the repair of both epimers of NAD(P)HX. This chain is NAD(P)H-hydrate epimerase, found in Candida albicans (strain WO-1) (Yeast).